Consider the following 304-residue polypeptide: HPr kinase/phosphorylase (304 aa).

Residues His136 and Lys157 contribute to the active site. 151-158 (GESGIGKS) provides a ligand contact to ATP. Ser158 lines the Mg(2+) pocket. Asp175 (proton acceptor; for phosphorylation activity. Proton donor; for dephosphorylation activity) is an active-site residue. The important for the catalytic mechanism of both phosphorylation and dephosphorylation stretch occupies residues 198 to 207 (LEVRGIGIID). Residue Glu199 coordinates Mg(2+). Residue Arg240 is part of the active site. The important for the catalytic mechanism of dephosphorylation stretch occupies residues 261-266 (PVRPGR).

It belongs to the HPrK/P family. In terms of assembly, homohexamer. It depends on Mg(2+) as a cofactor.

The catalysed reaction is [HPr protein]-L-serine + ATP = [HPr protein]-O-phospho-L-serine + ADP + H(+). It catalyses the reaction [HPr protein]-O-phospho-L-serine + phosphate + H(+) = [HPr protein]-L-serine + diphosphate. In terms of biological role, catalyzes the ATP- as well as the pyrophosphate-dependent phosphorylation of a specific serine residue in HPr, a phosphocarrier protein of the phosphoenolpyruvate-dependent sugar phosphotransferase system (PTS). HprK/P also catalyzes the pyrophosphate-producing, inorganic phosphate-dependent dephosphorylation (phosphorolysis) of seryl-phosphorylated HPr (P-Ser-HPr). The two antagonistic activities of HprK/P are regulated by several intracellular metabolites, which change their concentration in response to the absence or presence of rapidly metabolisable carbon sources (glucose, fructose, etc.) in the growth medium. Therefore, by controlling the phosphorylation state of HPr, HPrK/P is a sensor enzyme that plays a major role in the regulation of carbon metabolism and sugar transport: it mediates carbon catabolite repression (CCR), and regulates PTS-catalyzed carbohydrate uptake and inducer exclusion. This chain is HPr kinase/phosphorylase, found in Clostridium botulinum (strain Alaska E43 / Type E3).